A 596-amino-acid chain; its full sequence is Aspartic proteinase yapsin-7 (596 aa).

A signal peptide spans 1–25 (MTCLILWYLWLISTFQLEFATASTA). Asn-26 and Asn-59 each carry an N-linked (GlcNAc...) asparagine glycan. Residues 26-575 (NTTTTAKSGT…SPYTFNKDPA (550 aa)) are Lumenal-facing. Residues 56–440 (YYVNSTFGTP…DLEDNTIAIA (385 aa)) form the Peptidase A1 domain. The active site involves Asp-74. Asn-106, Asn-131, Asn-140, Asn-143, Asn-148, Asn-175, and Asn-308 each carry an N-linked (GlcNAc...) asparagine glycan. Asp-321 is a catalytic residue. N-linked (GlcNAc...) asparagine glycans are attached at residues Asn-391, Asn-455, Asn-478, Asn-484, Asn-549, and Asn-552. A helical membrane pass occupies residues 576 to 596 (GHVTRIASLLLLSIFSILIVL).

It belongs to the peptidase A1 family.

It is found in the cytoplasm. It localises to the endoplasmic reticulum membrane. In Saccharomyces cerevisiae (strain ATCC 204508 / S288c) (Baker's yeast), this protein is Aspartic proteinase yapsin-7 (YPS7).